The primary structure comprises 808 residues: Phenylalanine--tRNA ligase beta subunit (808 aa).

A tRNA-binding domain is found at 40 to 155; sequence NQGATGVVVG…DDVEIGSDAL (116 aa). Residues 409–484 enclose the B5 domain; it reads IEEPVVSLNL…RLYGYDNIPT (76 aa). 4 residues coordinate Mg(2+): Asp462, Asp468, Glu471, and Glu472. Positions 714–807 constitute an FDX-ACB domain; sequence PRFPAISRDI…LEASTGAVLR (94 aa).

It belongs to the phenylalanyl-tRNA synthetase beta subunit family. Type 1 subfamily. In terms of assembly, tetramer of two alpha and two beta subunits. It depends on Mg(2+) as a cofactor.

It is found in the cytoplasm. The enzyme catalyses tRNA(Phe) + L-phenylalanine + ATP = L-phenylalanyl-tRNA(Phe) + AMP + diphosphate + H(+). The chain is Phenylalanine--tRNA ligase beta subunit (pheT) from Halalkalibacterium halodurans (strain ATCC BAA-125 / DSM 18197 / FERM 7344 / JCM 9153 / C-125) (Bacillus halodurans).